The following is a 191-amino-acid chain: MKKEILEWIISIAVAFVILFIVGKFIVTPYTIKGESMDPTLKDGERVAVNIVGYKTGGLEKGNVVVFHANKNDDYVKRVIGVPGDKVEYKNDTLYVNGKKQDEPYLNYNLKHKQGDYITGTFQVKDLPNANPKSNVIPKGKYLVLGDNREVSKDSRAFGLIDEDQIVGKVSFRFWPFSEFKHNFNPENTKN.

Topologically, residues 1–7 (MKKEILE) are cytoplasmic. A helical membrane pass occupies residues 8 to 28 (WIISIAVAFVILFIVGKFIVT). Residues 29–191 (PYTIKGESMD…HNFNPENTKN (163 aa)) are Extracellular-facing. Catalysis depends on residues Ser-36 and Lys-77.

This sequence belongs to the peptidase S26 family.

It localises to the cell membrane. It catalyses the reaction Cleavage of hydrophobic, N-terminal signal or leader sequences from secreted and periplasmic proteins.. Functionally, essential for cell viability. The chain is Signal peptidase IB (spsB) from Staphylococcus aureus (strain COL).